The following is a 421-amino-acid chain: Gamma-glutamyl phosphate reductase (421 aa).

Belongs to the gamma-glutamyl phosphate reductase family.

It localises to the cytoplasm. It catalyses the reaction L-glutamate 5-semialdehyde + phosphate + NADP(+) = L-glutamyl 5-phosphate + NADPH + H(+). The protein operates within amino-acid biosynthesis; L-proline biosynthesis; L-glutamate 5-semialdehyde from L-glutamate: step 2/2. Its function is as follows. Catalyzes the NADPH-dependent reduction of L-glutamate 5-phosphate into L-glutamate 5-semialdehyde and phosphate. The product spontaneously undergoes cyclization to form 1-pyrroline-5-carboxylate. The polypeptide is Gamma-glutamyl phosphate reductase (Nitrosospira multiformis (strain ATCC 25196 / NCIMB 11849 / C 71)).